Reading from the N-terminus, the 199-residue chain is Thymidine kinase (199 aa).

ATP is bound by residues 23–30 (GSMFSGKT) and 95–98 (DEAQ). Residue glutamate 96 is the Proton acceptor of the active site. The Zn(2+) site is built by cysteine 152, cysteine 155, cysteine 184, and cysteine 187.

The protein belongs to the thymidine kinase family. In terms of assembly, homotetramer.

The protein localises to the cytoplasm. The enzyme catalyses thymidine + ATP = dTMP + ADP + H(+). This Bacteroides thetaiotaomicron (strain ATCC 29148 / DSM 2079 / JCM 5827 / CCUG 10774 / NCTC 10582 / VPI-5482 / E50) protein is Thymidine kinase.